The sequence spans 785 residues: Penicillin-binding protein 1A (785 aa).

The interval 1–61 is disordered; it reads MPPDDRLTAV…SGPGGPSGPG (61 aa). The span at 33–45 shows a compositional bias: pro residues; it reads SPPPKPPPPPPPG. Gly residues predominate over residues 46-59; it reads RGGGGPSGPGGPSG. A helical membrane pass occupies residues 77–97; sequence IAVAVMVLLPLITFGMAYMIV. Residues 118 to 299 are transglycosylase; that stretch reads GSEIARIVPP…RWNWVLDGMV (182 aa). Residue E151 is the Proton donor; for transglycosylase activity of the active site. A transpeptidase region spans residues 392–662; that stretch reads AVVSIDPRTG…EGVKPLVNKW (271 aa). S426 (acyl-ester intermediate; for transpeptidase activity) is an active-site residue. Disordered stretches follow at residues 605 to 626, 690 to 726, and 738 to 785; these read SRGHNLAGGRPSAAKTGTVQLG, ESFPKPTEIGGYAGVPQAPAAPPPSAGPPTDPGQPSV, and GITI…PPPP. 2 stretches are compositionally biased toward pro residues: residues 708–721 and 743–758; these read PAAPPPSAGPPTDP and IGPPTTVPVGPPPGAP. A compositionally biased stretch (low complexity) spans 759-775; it reads GAPVGPGAPEVPVAPGA.

The protein localises to the cell membrane. The catalysed reaction is [GlcNAc-(1-&gt;4)-Mur2Ac(oyl-L-Ala-gamma-D-Glu-L-Lys-D-Ala-D-Ala)](n)-di-trans,octa-cis-undecaprenyl diphosphate + beta-D-GlcNAc-(1-&gt;4)-Mur2Ac(oyl-L-Ala-gamma-D-Glu-L-Lys-D-Ala-D-Ala)-di-trans,octa-cis-undecaprenyl diphosphate = [GlcNAc-(1-&gt;4)-Mur2Ac(oyl-L-Ala-gamma-D-Glu-L-Lys-D-Ala-D-Ala)](n+1)-di-trans,octa-cis-undecaprenyl diphosphate + di-trans,octa-cis-undecaprenyl diphosphate + H(+). It catalyses the reaction Preferential cleavage: (Ac)2-L-Lys-D-Ala-|-D-Ala. Also transpeptidation of peptidyl-alanyl moieties that are N-acyl substituents of D-alanine.. It participates in cell wall biogenesis; peptidoglycan biosynthesis. In terms of biological role, cell wall formation. Synthesis of cross-linked peptidoglycan from the lipid intermediates. The enzyme has a penicillin-insensitive transglycosylase N-terminal domain (formation of linear glycan strands) and a penicillin-sensitive transpeptidase C-terminal domain (cross-linking of the peptide subunits). The chain is Penicillin-binding protein 1A (ponA1) from Mycolicibacterium smegmatis (strain ATCC 700084 / mc(2)155) (Mycobacterium smegmatis).